We begin with the raw amino-acid sequence, 199 residues long: Heparin-binding hemagglutinin (199 aa).

Low complexity predominate over residues 162 to 180 (KAAPAKKAAPAKKAAPAKK). The segment at 162–199 (KAAPAKKAAPAKKAAPAKKAAAKKAPAKKAAAKKVTQK) is disordered. The span at 181–199 (AAAKKAPAKKAAAKKVTQK) shows a compositional bias: basic residues.

This sequence to M.leprae HbhA. Glycosylated. Glycosylation may protect the protein from proteolytic degradation and be important for hemagglutination. It suggests that the carbohydrate moiety may be located within the C-terminal domain of HbhA.

It localises to the cell surface. Required for extrapulmonary dissemination. Mediates adherence to epithelial cells by binding to sulfated glycoconjugates present at the surface of these cells. The sequence is that of Heparin-binding hemagglutinin (hbhA) from Mycobacterium tuberculosis (strain CDC 1551 / Oshkosh).